A 209-amino-acid polypeptide reads, in one-letter code: MAVFKTLTDADIAMFSTSLVAGVDEVGRGPLVGDVVTAAVILDPNRPILGLNDSKKLTEKRREALFDEICEKALSFHVGRASPAEIDELNILHATMLAMQRAVSGLKLTPALVLVDGNRSPAFTHQGLSLASHSIIKGDGLIASISAASIIAKVTRDREMDALDAAYPQYGFAKHKGYPTKAHFEAIAEHGVFDQYRKSFKPVKALLER.

The RNase H type-2 domain maps to 18-209; sequence SLVAGVDEVG…FKPVKALLER (192 aa). 3 residues coordinate a divalent metal cation: Asp24, Glu25, and Asp116.

The protein belongs to the RNase HII family. The cofactor is Mn(2+). It depends on Mg(2+) as a cofactor.

The protein localises to the cytoplasm. It catalyses the reaction Endonucleolytic cleavage to 5'-phosphomonoester.. Its function is as follows. Endonuclease that specifically degrades the RNA of RNA-DNA hybrids. The polypeptide is Ribonuclease HII (Shewanella oneidensis (strain ATCC 700550 / JCM 31522 / CIP 106686 / LMG 19005 / NCIMB 14063 / MR-1)).